Consider the following 417-residue polypeptide: Exodeoxyribonuclease 7 large subunit (417 aa).

The protein belongs to the XseA family. Heterooligomer composed of large and small subunits.

It localises to the cytoplasm. It catalyses the reaction Exonucleolytic cleavage in either 5'- to 3'- or 3'- to 5'-direction to yield nucleoside 5'-phosphates.. Its function is as follows. Bidirectionally degrades single-stranded DNA into large acid-insoluble oligonucleotides, which are then degraded further into small acid-soluble oligonucleotides. The polypeptide is Exodeoxyribonuclease 7 large subunit (Corynebacterium glutamicum (strain ATCC 13032 / DSM 20300 / JCM 1318 / BCRC 11384 / CCUG 27702 / LMG 3730 / NBRC 12168 / NCIMB 10025 / NRRL B-2784 / 534)).